A 329-amino-acid chain; its full sequence is GTP 3',8-cyclase (329 aa).

The 227-residue stretch at 8 to 234 folds into the Radical SAM core domain; sequence AFARKFYYLR…QLRQRSDGPA (227 aa). R17 provides a ligand contact to GTP. Positions 24 and 28 each coordinate [4Fe-4S] cluster. Position 30 (Y30) interacts with S-adenosyl-L-methionine. C31 serves as a coordination point for [4Fe-4S] cluster. R68 is a GTP binding site. G72 serves as a coordination point for S-adenosyl-L-methionine. GTP is bound at residue T99. S123 is a binding site for S-adenosyl-L-methionine. K160 is a GTP binding site. M194 contributes to the S-adenosyl-L-methionine binding site. [4Fe-4S] cluster contacts are provided by C257 and C260. 262 to 264 contacts GTP; the sequence is RLR. C274 contacts [4Fe-4S] cluster.

This sequence belongs to the radical SAM superfamily. MoaA family. In terms of assembly, monomer and homodimer. Requires [4Fe-4S] cluster as cofactor.

It carries out the reaction GTP + AH2 + S-adenosyl-L-methionine = (8S)-3',8-cyclo-7,8-dihydroguanosine 5'-triphosphate + 5'-deoxyadenosine + L-methionine + A + H(+). The protein operates within cofactor biosynthesis; molybdopterin biosynthesis. In terms of biological role, catalyzes the cyclization of GTP to (8S)-3',8-cyclo-7,8-dihydroguanosine 5'-triphosphate. The sequence is that of GTP 3',8-cyclase from Escherichia coli O127:H6 (strain E2348/69 / EPEC).